The primary structure comprises 807 residues: Leucine--tRNA ligase (807 aa).

The 'HIGH' region motif lies at 40 to 51 (PYPSGTGLHVGH). Positions 576 to 580 (KMSKS) match the 'KMSKS' region motif. Position 579 (lysine 579) interacts with ATP.

This sequence belongs to the class-I aminoacyl-tRNA synthetase family.

Its subcellular location is the cytoplasm. It catalyses the reaction tRNA(Leu) + L-leucine + ATP = L-leucyl-tRNA(Leu) + AMP + diphosphate. The protein is Leucine--tRNA ligase of Pelodictyon phaeoclathratiforme (strain DSM 5477 / BU-1).